The following is an 88-amino-acid chain: Small ribosomal subunit protein bS20 (88 aa).

It belongs to the bacterial ribosomal protein bS20 family.

Binds directly to 16S ribosomal RNA. This is Small ribosomal subunit protein bS20 from Rhodospirillum rubrum (strain ATCC 11170 / ATH 1.1.1 / DSM 467 / LMG 4362 / NCIMB 8255 / S1).